The sequence spans 599 residues: NADH-quinone oxidoreductase subunit C/D (599 aa).

The tract at residues 1-190 (MMIDQIAQES…DPFELTRQKE (190 aa)) is NADH dehydrogenase I subunit C. The NADH dehydrogenase I subunit D stretch occupies residues 214 to 599 (DFMFLNLGPN…IDFVMSDVDR (386 aa)).

The protein in the N-terminal section; belongs to the complex I 30 kDa subunit family. It in the C-terminal section; belongs to the complex I 49 kDa subunit family. As to quaternary structure, NDH-1 is composed of 13 different subunits. Subunits NuoB, CD, E, F, and G constitute the peripheral sector of the complex.

It localises to the cell inner membrane. It carries out the reaction a quinone + NADH + 5 H(+)(in) = a quinol + NAD(+) + 4 H(+)(out). In terms of biological role, NDH-1 shuttles electrons from NADH, via FMN and iron-sulfur (Fe-S) centers, to quinones in the respiratory chain. The immediate electron acceptor for the enzyme in this species is believed to be ubiquinone. Couples the redox reaction to proton translocation (for every two electrons transferred, four hydrogen ions are translocated across the cytoplasmic membrane), and thus conserves the redox energy in a proton gradient. This Photorhabdus laumondii subsp. laumondii (strain DSM 15139 / CIP 105565 / TT01) (Photorhabdus luminescens subsp. laumondii) protein is NADH-quinone oxidoreductase subunit C/D.